Here is a 379-residue protein sequence, read N- to C-terminus: Cobalt-precorrin-5B C(1)-methyltransferase (379 aa).

It belongs to the CbiD family.

It carries out the reaction Co-precorrin-5B + S-adenosyl-L-methionine = Co-precorrin-6A + S-adenosyl-L-homocysteine. It functions in the pathway cofactor biosynthesis; adenosylcobalamin biosynthesis; cob(II)yrinate a,c-diamide from sirohydrochlorin (anaerobic route): step 6/10. In terms of biological role, catalyzes the methylation of C-1 in cobalt-precorrin-5B to form cobalt-precorrin-6A. In Salmonella heidelberg (strain SL476), this protein is Cobalt-precorrin-5B C(1)-methyltransferase.